The sequence spans 590 residues: DNA mismatch repair protein MutL (590 aa).

The span at 335–351 (PLSSASPKLPESTTATA) shows a compositional bias: polar residues. Residues 335–354 (PLSSASPKLPESTTATAQPH) are disordered.

It belongs to the DNA mismatch repair MutL/HexB family.

In terms of biological role, this protein is involved in the repair of mismatches in DNA. It is required for dam-dependent methyl-directed DNA mismatch repair. May act as a 'molecular matchmaker', a protein that promotes the formation of a stable complex between two or more DNA-binding proteins in an ATP-dependent manner without itself being part of a final effector complex. The protein is DNA mismatch repair protein MutL of Dichelobacter nodosus (strain VCS1703A).